The following is a 117-amino-acid chain: Large ribosomal subunit protein bL20 (117 aa).

This sequence belongs to the bacterial ribosomal protein bL20 family.

Its function is as follows. Binds directly to 23S ribosomal RNA and is necessary for the in vitro assembly process of the 50S ribosomal subunit. It is not involved in the protein synthesizing functions of that subunit. The sequence is that of Large ribosomal subunit protein bL20 from Pasteurella multocida (strain Pm70).